Consider the following 198-residue polypeptide: ATP-dependent Clp protease proteolytic subunit 1 (198 aa).

Ser96 functions as the Nucleophile in the catalytic mechanism. Residue His121 is part of the active site.

This sequence belongs to the peptidase S14 family. In terms of assembly, fourteen ClpP subunits assemble into 2 heptameric rings which stack back to back to give a disk-like structure with a central cavity, resembling the structure of eukaryotic proteasomes.

It localises to the cytoplasm. It catalyses the reaction Hydrolysis of proteins to small peptides in the presence of ATP and magnesium. alpha-casein is the usual test substrate. In the absence of ATP, only oligopeptides shorter than five residues are hydrolyzed (such as succinyl-Leu-Tyr-|-NHMec, and Leu-Tyr-Leu-|-Tyr-Trp, in which cleavage of the -Tyr-|-Leu- and -Tyr-|-Trp bonds also occurs).. In terms of biological role, cleaves peptides in various proteins in a process that requires ATP hydrolysis. Has a chymotrypsin-like activity. Plays a major role in the degradation of misfolded proteins. The sequence is that of ATP-dependent Clp protease proteolytic subunit 1 from Synechocystis sp. (strain ATCC 27184 / PCC 6803 / Kazusa).